The sequence spans 69 residues: DNA-directed RNA polymerase subunit omega (69 aa).

This sequence belongs to the RNA polymerase subunit omega family. As to quaternary structure, the RNAP catalytic core consists of 2 alpha, 1 beta, 1 beta' and 1 omega subunit. When a sigma factor is associated with the core the holoenzyme is formed, which can initiate transcription.

It catalyses the reaction RNA(n) + a ribonucleoside 5'-triphosphate = RNA(n+1) + diphosphate. In terms of biological role, promotes RNA polymerase assembly. Latches the N- and C-terminal regions of the beta' subunit thereby facilitating its interaction with the beta and alpha subunits. This chain is DNA-directed RNA polymerase subunit omega, found in Carboxydothermus hydrogenoformans (strain ATCC BAA-161 / DSM 6008 / Z-2901).